A 303-amino-acid chain; its full sequence is Protease HtpX homolog (303 aa).

The next 2 membrane-spanning stretches (helical) occupy residues valine 4 to isoleucine 24 and methionine 38 to leucine 58. Histidine 144 contacts Zn(2+). Glutamate 145 is an active-site residue. Histidine 148 is a binding site for Zn(2+). The next 2 membrane-spanning stretches (helical) occupy residues glycine 152–serine 172 and isoleucine 199–phenylalanine 219. Glutamate 224 contacts Zn(2+).

It belongs to the peptidase M48B family. The cofactor is Zn(2+).

The protein resides in the cell inner membrane. The sequence is that of Protease HtpX homolog from Chlorobium phaeobacteroides (strain BS1).